An 833-amino-acid polypeptide reads, in one-letter code: Leucine--tRNA ligase (833 aa).

The 'HIGH' region motif lies at 41–52; sequence PYPSGAGLHVGH. The 'KMSKS' region signature appears at 610 to 614; sequence KMSKS. Residue Lys-613 participates in ATP binding.

It belongs to the class-I aminoacyl-tRNA synthetase family.

The protein resides in the cytoplasm. The catalysed reaction is tRNA(Leu) + L-leucine + ATP = L-leucyl-tRNA(Leu) + AMP + diphosphate. The polypeptide is Leucine--tRNA ligase (Streptococcus pyogenes serotype M4 (strain MGAS10750)).